A 128-amino-acid polypeptide reads, in one-letter code: Protein C10 (128 aa).

Belongs to the UPF0456 family.

The protein resides in the cytoplasm. In Xenopus tropicalis (Western clawed frog), this protein is Protein C10.